We begin with the raw amino-acid sequence, 499 residues long: Pyruvate kinase 1 (499 aa).

Residue Arg50 participates in substrate binding. Residues Asn52, Ser54, Asp84, and Thr85 each contribute to the K(+) site. 52-55 (NFSH) contacts ATP. Arg91 is an ATP binding site. Glu241 contributes to the Mg(2+) binding site. Substrate-binding residues include Gly264, Asp265, and Thr297. Residue Asp265 coordinates Mg(2+).

Belongs to the pyruvate kinase family. Homotetramer. It depends on Mg(2+) as a cofactor. K(+) serves as cofactor.

It catalyses the reaction pyruvate + ATP = phosphoenolpyruvate + ADP + H(+). Its pathway is carbohydrate degradation; glycolysis; pyruvate from D-glyceraldehyde 3-phosphate: step 5/5. Its activity is regulated as follows. Activated by fructose 2,6-bisphosphate, activated by the effector in a cooperative manner. This chain is Pyruvate kinase 1 (PYK1), found in Trypanosoma brucei brucei.